The primary structure comprises 352 residues: 4-hydroxy-2-oxovalerate aldolase 4 (352 aa).

Residues 9 to 261 enclose the Pyruvate carboxyltransferase domain; it reads IRVTDSSLRD…RTGIDTLKII (253 aa). Residue 17 to 18 participates in substrate binding; that stretch reads RD. D18 provides a ligand contact to Mn(2+). H21 acts as the Proton acceptor in catalysis. 2 residues coordinate substrate: S171 and H200. Residues H200 and H202 each coordinate Mn(2+). Residue Y291 coordinates substrate.

Belongs to the 4-hydroxy-2-oxovalerate aldolase family.

It catalyses the reaction (S)-4-hydroxy-2-oxopentanoate = acetaldehyde + pyruvate. This chain is 4-hydroxy-2-oxovalerate aldolase 4, found in Rhodococcus jostii (strain RHA1).